The following is a 122-amino-acid chain: uncharacterized protein (122 aa).

The N-terminal stretch at 1–28 (MVPGPPESVVRFFLWFCFLLPPTRKASC) is a signal peptide. N-linked (GlcNAc...) asparagine glycosylation is present at Asn49.

It localises to the secreted. This is an uncharacterized protein from Homo sapiens (Human).